We begin with the raw amino-acid sequence, 1235 residues long: ATP-dependent helicase/nuclease subunit A (1235 aa).

The 471-residue stretch at 12-482 folds into the UvrD-like helicase ATP-binding domain; sequence TLWTDDQWKA…IDLSQNFRSR (471 aa). Position 33 to 40 (33 to 40) interacts with ATP; it reads AAAGSGKT. Residues 509 to 800 form the UvrD-like helicase C-terminal domain; the sequence is AAELTLGANF…RMMTIHASKG (292 aa).

This sequence belongs to the helicase family. AddA subfamily. Heterodimer of AddA and AddB/RexB. It depends on Mg(2+) as a cofactor.

The catalysed reaction is Couples ATP hydrolysis with the unwinding of duplex DNA by translocating in the 3'-5' direction.. It catalyses the reaction ATP + H2O = ADP + phosphate + H(+). The heterodimer acts as both an ATP-dependent DNA helicase and an ATP-dependent, dual-direction single-stranded exonuclease. Recognizes the chi site generating a DNA molecule suitable for the initiation of homologous recombination. The AddA nuclease domain is required for chi fragment generation; this subunit has the helicase and 3' -&gt; 5' nuclease activities. The sequence is that of ATP-dependent helicase/nuclease subunit A from Listeria welshimeri serovar 6b (strain ATCC 35897 / DSM 20650 / CCUG 15529 / CIP 8149 / NCTC 11857 / SLCC 5334 / V8).